The primary structure comprises 249 residues: ATP synthase subunit a (249 aa).

6 helical membrane-spanning segments follow: residues 30–50 (QSPV…YVGM), 86–106 (FFPF…LGLL), 115–135 (HIAV…IVSL), 142–162 (FFAH…LVPI), 191–211 (MFAA…VLAV), and 218–238 (VALM…FAIL).

The protein belongs to the ATPase A chain family. In terms of assembly, F-type ATPases have 2 components, CF(1) - the catalytic core - and CF(0) - the membrane proton channel. CF(1) has five subunits: alpha(3), beta(3), gamma(1), delta(1), epsilon(1). CF(0) has three main subunits: a(1), b(2) and c(9-12). The alpha and beta chains form an alternating ring which encloses part of the gamma chain. CF(1) is attached to CF(0) by a central stalk formed by the gamma and epsilon chains, while a peripheral stalk is formed by the delta and b chains.

Its subcellular location is the cell inner membrane. Functionally, key component of the proton channel; it plays a direct role in the translocation of protons across the membrane. The sequence is that of ATP synthase subunit a from Gluconacetobacter diazotrophicus (strain ATCC 49037 / DSM 5601 / CCUG 37298 / CIP 103539 / LMG 7603 / PAl5).